The following is a 259-amino-acid chain: Protein unc-50 homolog (259 aa).

Met-1 carries the N-acetylmethionine modification. The Cytoplasmic portion of the chain corresponds to 1–82 (MLPSTSVNSL…TKDQWARDDP (82 aa)). A Phosphoserine modification is found at Ser-6. Residues 83-103 (AFLVLLSIWLCVSTIGFGFVL) traverse the membrane as a helical segment. At 104 to 115 (DMGFFETIKLLL) the chain is on the lumenal side. Residues 116-136 (WVVLIDCVGVGLLIATLMWFI) form a helical membrane-spanning segment. At 137–163 (SNKYLVKRQSRDYDVEWGYAFDVHLNA) the chain is on the cytoplasmic side. Residues 164-184 (FYPLLVILHFIQLFFINHVIL) form a helical membrane-spanning segment. The Lumenal segment spans residues 185-187 (TDT). The chain crosses the membrane as a helical span at residues 188–208 (FIGYLVGNTLWLVAVGYYIYV). Over 209-222 (TFLGYSALPFLKNT) the chain is Cytoplasmic. The helical transmembrane segment at 223 to 243 (VILLYPFAPLILLYGLSLALG) threads the bilayer. Residues 244–259 (WNFTHTLCSFYKYRVK) lie on the Lumenal side of the membrane.

The protein belongs to the unc-50 family. In terms of tissue distribution, present in periodontal ligament fibroblasts (at protein level).

The protein localises to the nucleus inner membrane. Its subcellular location is the golgi apparatus membrane. Involved in the cell surface expression of neuronal nicotinic receptors. Binds RNA. In Homo sapiens (Human), this protein is Protein unc-50 homolog (UNC50).